We begin with the raw amino-acid sequence, 605 residues long: MELALVGNPSNGVAKPSCNSVGSLPVVSSNAVINPPVTSAAGATLGRHLARRLVQIGATDVFAVPGDFNLTLLDYLIAEPGLKLIGCCNELNAGYAADGYARARGVGACAVTFTVGGLSVLNAIAGAYSENLPVICIVGGPNSNDYGTNRILHHTIGLPDFSQELRCFQTITCYQAVINNLDDAHEQIDTAIATALRESKPVYISVGCNLAGLSHPTFSREPVPLFISPRLSNKANLEYAVEAAADFLNKAVKPVMVGGPKIRVAKAKKAFAGIAESSGYPFAVMPSAKGLVPEHHPRFIGTYWGAVSTTFCAEIVESADAYLFAGPIFNDYSSVGYSLLLKREKAVIVQPDRVVVGNGPAFGCILMTEFLDALAKRLDRNTTAYDNYRRIFIPDREPPNGQPDEPLRVNILFKHIKEMLSGDTAVIAETGDSWFNCQKLRLPEGCGYEFQMQYGSIGWSVGATLGYAQAAKDKRVISCIGDGSFQMTAQDVSTMLRCGQKSIIFLINNGGYTIEVEIHDGPYNVIKNWDYTGLIDAIHNSDGNCWTKKVRTEEELIEAIATATGAKKDCLCFIEIIVHKDDTSKELLEWGSRVSAANSRPPNPQ.

Residues D67 and H154 each contribute to the substrate site. The tract at residues 432–514 (DSWFNCQKLR…FLINNGGYTI (83 aa)) is thiamine pyrophosphate binding. Mg(2+)-binding residues include D482, N509, and G511. A substrate-binding site is contributed by E515.

Belongs to the TPP enzyme family. In terms of assembly, homotetramer. It depends on a metal cation as a cofactor. Thiamine diphosphate is required as a cofactor.

The catalysed reaction is a 2-oxocarboxylate + H(+) = an aldehyde + CO2. This Oryza sativa subsp. japonica (Rice) protein is Pyruvate decarboxylase 1 (PDC1).